The sequence spans 277 residues: Putative gamma-glutamylcyclotransferase YkqA (277 aa).

Residue 8 to 11 (YGTL) participates in substrate binding. The active-site Proton acceptor is Glu205.

The protein belongs to the gamma-glutamylcyclotransferase family.

Its function is as follows. Putative gamma-glutamylcyclotransferase. This Bacillus subtilis (strain 168) protein is Putative gamma-glutamylcyclotransferase YkqA (ykqA).